Here is an 80-residue protein sequence, read N- to C-terminus: Translation initiation factor IF-1, chloroplastic (80 aa).

The S1-like domain maps to 1 to 72; it reads MKKQNLIDME…TKGRIIYRLR (72 aa).

It belongs to the IF-1 family. Component of the 30S ribosomal translation pre-initiation complex which assembles on the 30S ribosome in the order IF-2 and IF-3, IF-1 and N-formylmethionyl-tRNA(fMet); mRNA recruitment can occur at any time during PIC assembly.

It is found in the plastid. The protein localises to the chloroplast. One of the essential components for the initiation of protein synthesis. Stabilizes the binding of IF-2 and IF-3 on the 30S subunit to which N-formylmethionyl-tRNA(fMet) subsequently binds. Helps modulate mRNA selection, yielding the 30S pre-initiation complex (PIC). Upon addition of the 50S ribosomal subunit IF-1, IF-2 and IF-3 are released leaving the mature 70S translation initiation complex. The chain is Translation initiation factor IF-1, chloroplastic from Adiantum capillus-veneris (Maidenhair fern).